A 238-amino-acid polypeptide reads, in one-letter code: Ribosomal RNA small subunit methyltransferase G (238 aa).

S-adenosyl-L-methionine is bound by residues Gly106, Leu111, Ile157 to Glu158, and Arg170.

Belongs to the methyltransferase superfamily. RNA methyltransferase RsmG family.

The protein resides in the cytoplasm. The enzyme catalyses guanosine(527) in 16S rRNA + S-adenosyl-L-methionine = N(7)-methylguanosine(527) in 16S rRNA + S-adenosyl-L-homocysteine. Its function is as follows. Specifically methylates the N7 position of guanine in position 527 of 16S rRNA. This chain is Ribosomal RNA small subunit methyltransferase G, found in Psychrobacter arcticus (strain DSM 17307 / VKM B-2377 / 273-4).